The chain runs to 135 residues: Small ribosomal subunit protein uS9 (135 aa).

The interval 96–135 (SADNRKPLKTEGHLSRDPRAKERRKYGLKKARKAPQFSKR) is disordered. Basic and acidic residues predominate over residues 97 to 115 (ADNRKPLKTEGHLSRDPRA). A compositionally biased stretch (basic residues) spans 116–135 (KERRKYGLKKARKAPQFSKR).

This sequence belongs to the universal ribosomal protein uS9 family.

The polypeptide is Small ribosomal subunit protein uS9 (Prochlorococcus marinus (strain MIT 9303)).